The chain runs to 530 residues: Histone-arginine methyltransferase CARMER (530 aa).

The SAM-dependent MTase PRMT-type domain maps to 141–450 (ASQYFQFYGY…QSYDVTIDLH (310 aa)). 6 residues coordinate S-adenosyl-L-methionine: glutamine 154, arginine 163, glycine 187, glutamate 209, glutamate 238, and threonine 266. Position 501 is an asymmetric dimethylarginine; by autocatalysis (arginine 501).

It belongs to the class I-like SAM-binding methyltransferase superfamily. Protein arginine N-methyltransferase family. As to quaternary structure, homodimer. Post-translationally, the dimethylated protein is the major form.

It localises to the cytoplasm. The protein resides in the nucleus. It catalyses the reaction L-arginyl-[protein] + 2 S-adenosyl-L-methionine = N(omega),N(omega)-dimethyl-L-arginyl-[protein] + 2 S-adenosyl-L-homocysteine + 2 H(+). Functionally, methylates (mono- and asymmetric dimethylation) the guanidino nitrogens of arginyl residues in proteins. May methylate histone H3 at 'Arg-17' and activate transcription via chromatin remodeling. This Drosophila simulans (Fruit fly) protein is Histone-arginine methyltransferase CARMER (Art4).